We begin with the raw amino-acid sequence, 472 residues long: UDP-N-acetylmuramate--L-alanine ligase (472 aa).

118-124 is a binding site for ATP; sequence GTHGKTT.

It belongs to the MurCDEF family.

The protein resides in the cytoplasm. The catalysed reaction is UDP-N-acetyl-alpha-D-muramate + L-alanine + ATP = UDP-N-acetyl-alpha-D-muramoyl-L-alanine + ADP + phosphate + H(+). Its pathway is cell wall biogenesis; peptidoglycan biosynthesis. Functionally, cell wall formation. This is UDP-N-acetylmuramate--L-alanine ligase from Methylococcus capsulatus (strain ATCC 33009 / NCIMB 11132 / Bath).